Here is a 184-residue protein sequence, read N- to C-terminus: Large ribosomal subunit protein uL6 (184 aa).

Belongs to the universal ribosomal protein uL6 family. Part of the 50S ribosomal subunit.

This protein binds to the 23S rRNA, and is important in its secondary structure. It is located near the subunit interface in the base of the L7/L12 stalk, and near the tRNA binding site of the peptidyltransferase center. The chain is Large ribosomal subunit protein uL6 from Mycoplasma genitalium (strain ATCC 33530 / DSM 19775 / NCTC 10195 / G37) (Mycoplasmoides genitalium).